The chain runs to 265 residues: Indole-3-glycerol phosphate synthase (265 aa).

The protein belongs to the TrpC family.

The catalysed reaction is 1-(2-carboxyphenylamino)-1-deoxy-D-ribulose 5-phosphate + H(+) = (1S,2R)-1-C-(indol-3-yl)glycerol 3-phosphate + CO2 + H2O. It participates in amino-acid biosynthesis; L-tryptophan biosynthesis; L-tryptophan from chorismate: step 4/5. This Syntrophobacter fumaroxidans (strain DSM 10017 / MPOB) protein is Indole-3-glycerol phosphate synthase.